A 251-amino-acid polypeptide reads, in one-letter code: Isoprenyl transferase (251 aa).

Asp31 is a catalytic residue. A Mg(2+)-binding site is contributed by Asp31. Residues 32-35, Trp36, Arg44, His48, and 76-78 each bind substrate; these read GNGR and STE. The Proton acceptor role is filled by Asn79. Residues Trp80, Arg82, Arg199, and 205 to 207 contribute to the substrate site; that span reads RIS. Glu218 contacts Mg(2+).

This sequence belongs to the UPP synthase family. Homodimer. Requires Mg(2+) as cofactor.

In terms of biological role, catalyzes the condensation of isopentenyl diphosphate (IPP) with allylic pyrophosphates generating different type of terpenoids. In Thermosynechococcus vestitus (strain NIES-2133 / IAM M-273 / BP-1), this protein is Isoprenyl transferase.